A 216-amino-acid polypeptide reads, in one-letter code: Uracil phosphoribosyltransferase (216 aa).

30–34 (KNLVK) provides a ligand contact to GTP. 5-phospho-alpha-D-ribose 1-diphosphate-binding positions include R80, R105, and 140 to 148 (DPMIATGST). Uracil-binding positions include I203 and 208 to 210 (GDA). 5-phospho-alpha-D-ribose 1-diphosphate is bound at residue D209.

It belongs to the UPRTase family. Mg(2+) is required as a cofactor.

It carries out the reaction UMP + diphosphate = 5-phospho-alpha-D-ribose 1-diphosphate + uracil. The protein operates within pyrimidine metabolism; UMP biosynthesis via salvage pathway; UMP from uracil: step 1/1. Allosterically activated by GTP. Its function is as follows. Catalyzes the conversion of uracil and 5-phospho-alpha-D-ribose 1-diphosphate (PRPP) to UMP and diphosphate. The protein is Uracil phosphoribosyltransferase of Sulfolobus acidocaldarius (strain ATCC 33909 / DSM 639 / JCM 8929 / NBRC 15157 / NCIMB 11770).